A 208-amino-acid polypeptide reads, in one-letter code: Ras-related protein Rab6 (208 aa).

Residue 19-27 participates in GTP binding; the sequence is GEQSVGKTS. An Effector region motif is present at residues 41–49; that stretch reads YQATIGIDF. GTP is bound by residues 67–71, 125–128, and 155–157; these read DTAGQ, NKTD, and SAK. Residues 176–208 are disordered; that stretch reads MDSTENKPSEDMQEVVLKDSPNETKDPEGGCAC. Residues 179–208 are compositionally biased toward basic and acidic residues; it reads TENKPSEDMQEVVLKDSPNETKDPEGGCAC.

It belongs to the small GTPase superfamily. Rab family. Interacts with Rich and Act5C. Interacts with BicD (via C-terminal domain). Interacts (in GTP-bound) with GCC1/CG10703 and cbs. Interacts with Gorab (via C-terminus); binds to a Gorab homodimer, this interaction seems to be required for trans-Golgi localization of Gorab. Expressed in larval eye, wing and leg imaginal disks and in salivary gland. Expressed in the larval optic lobe, showing an enrichment in the neuropil. In the adult brain, expressed in photoreceptors and mushroom body.

Its subcellular location is the golgi apparatus membrane. It localises to the synapse. The protein localises to the perikaryon. In terms of biological role, protein transport. Regulator of membrane traffic from the Golgi apparatus towards the endoplasmic reticulum (ER). Mediates membrane trafficking during egg chamber growth and organization, possibly upstream of exocyst component Sec5. Also during oogenesis, plays a role, together with BicD but independently of Sec5, in the polarization of the oocyte microtubule cytoskeleton, in the localization of oskar mRNA and in the anterodorsal secretion of grk. Required for anterograde opsin transport through the ER-Golgi complex. Plays a role, together with Rich, in regulating CadN transport in photoreceptor cells which is required for the formation of normal synaptic connections between axons from the inner photoreceptor cells in the eye and postsynaptic cells in the brain medulla layer M6. Necessary for proper development of bristle shafts of macrochaete and microchaete on the head, thorax and scutellum. Modulates Notch signaling. As a key regulator of vesicular traffic, plays a critical role in the regulation of actin organization and is required for normal rates of phagocytic uptake during phagocytosis involved in defense against viral and fungal infection. The chain is Ras-related protein Rab6 from Drosophila melanogaster (Fruit fly).